The primary structure comprises 277 residues: Phosphoenolpyruvate synthase regulatory protein (277 aa).

157-164 (GVSRCGKT) lines the ADP pocket.

It belongs to the pyruvate, phosphate/water dikinase regulatory protein family. PSRP subfamily.

It carries out the reaction [pyruvate, water dikinase] + ADP = [pyruvate, water dikinase]-phosphate + AMP + H(+). It catalyses the reaction [pyruvate, water dikinase]-phosphate + phosphate + H(+) = [pyruvate, water dikinase] + diphosphate. Its function is as follows. Bifunctional serine/threonine kinase and phosphorylase involved in the regulation of the phosphoenolpyruvate synthase (PEPS) by catalyzing its phosphorylation/dephosphorylation. This Escherichia coli O7:K1 (strain IAI39 / ExPEC) protein is Phosphoenolpyruvate synthase regulatory protein.